The chain runs to 269 residues: Putative carbamate hydrolase RutD (269 aa).

Residues 26 to 144 enclose the AB hydrolase-1 domain; the sequence is VVLLSSGLGG…CFDTRLHLLN (119 aa).

This sequence belongs to the AB hydrolase superfamily. Hydrolase RutD family.

It carries out the reaction carbamate + 2 H(+) = NH4(+) + CO2. In terms of biological role, involved in pyrimidine catabolism. May facilitate the hydrolysis of carbamate, a reaction that can also occur spontaneously. This is Putative carbamate hydrolase RutD from Caulobacter vibrioides (strain ATCC 19089 / CIP 103742 / CB 15) (Caulobacter crescentus).